The chain runs to 1072 residues: DNA-directed RNA polymerase subunit beta (1072 aa).

The protein belongs to the RNA polymerase beta chain family. In terms of assembly, in plastids the minimal PEP RNA polymerase catalytic core is composed of four subunits: alpha, beta, beta', and beta''. When a (nuclear-encoded) sigma factor is associated with the core the holoenzyme is formed, which can initiate transcription.

It localises to the plastid. Its subcellular location is the chloroplast. It catalyses the reaction RNA(n) + a ribonucleoside 5'-triphosphate = RNA(n+1) + diphosphate. In terms of biological role, DNA-dependent RNA polymerase catalyzes the transcription of DNA into RNA using the four ribonucleoside triphosphates as substrates. The sequence is that of DNA-directed RNA polymerase subunit beta from Barbarea verna (Land cress).